Here is a 607-residue protein sequence, read N- to C-terminus: Developmental gene 1062 protein (607 aa).

Disordered regions lie at residues 62 to 84 (LQGQ…HNNQ), 334 to 451 (ICDD…SNFQ), and 568 to 602 (DNNT…NDLL). The span at 334-363 (ICDDSSNSSTPSLSSYSNGNNKYNNNNNDS) shows a compositional bias: low complexity. The span at 364–382 (SESDESDDDDNNDDDDNDS) shows a compositional bias: acidic residues. Composition is skewed to low complexity over residues 383-451 (IDFN…SNFQ) and 568-582 (DNNT…ISVN).

The chain is Developmental gene 1062 protein (DG1062) from Dictyostelium discoideum (Social amoeba).